We begin with the raw amino-acid sequence, 67 residues long: Non-specific lipid-transfer protein 2 (67 aa).

4 disulfides stabilise this stretch: Cys-3/Cys-35, Cys-11/Cys-25, Cys-26/Cys-61, and Cys-37/Cys-67.

It belongs to the plant LTP family. As to quaternary structure, monomer. Disulfide bonds.

Functionally, plant non-specific lipid-transfer proteins transfer phospholipids as well as galactolipids across membranes. May play a role in wax or cutin deposition in the cell walls of expanding epidermal cells and certain secretory tissues. This is Non-specific lipid-transfer protein 2 from Apium graveolens var. rapaceum (Celeriac).